Reading from the N-terminus, the 808-residue chain is Quinoprotein glucose dehydrogenase (808 aa).

A signal peptide spans 1–33 (MSTTSRPGLWALITAAVFALCGAILTVGGAWVA). The next 4 membrane-spanning stretches (helical) occupy residues 35-54 (IGGPLYYVILGLALLATAFL), 59-76 (NPAALYLFAVVVFGTVIW), 94-108 (IVIILGIWLLLPFVS), and 123-138 (GAVGVAVLALFASLFT). Residue D470 is the Proton acceptor of the active site. The tract at residues 514 to 545 (VPAPETPVPQGAAPGDHTSPTQPMSQLTLRPK) is disordered. The span at 531-541 (TSPTQPMSQLT) shows a compositional bias: polar residues.

It belongs to the bacterial PQQ dehydrogenase family. Requires pyrroloquinoline quinone as cofactor.

Its subcellular location is the cell inner membrane. The enzyme catalyses a ubiquinone + D-glucose = D-glucono-1,5-lactone + a ubiquinol. This chain is Quinoprotein glucose dehydrogenase (gdh), found in Gluconobacter oxydans (strain 621H) (Gluconobacter suboxydans).